A 356-amino-acid chain; its full sequence is UDP-3-O-acylglucosamine N-acyltransferase (356 aa).

Histidine 242 (proton acceptor) is an active-site residue.

This sequence belongs to the transferase hexapeptide repeat family. LpxD subfamily. As to quaternary structure, homotrimer.

The catalysed reaction is a UDP-3-O-[(3R)-3-hydroxyacyl]-alpha-D-glucosamine + a (3R)-hydroxyacyl-[ACP] = a UDP-2-N,3-O-bis[(3R)-3-hydroxyacyl]-alpha-D-glucosamine + holo-[ACP] + H(+). The protein operates within bacterial outer membrane biogenesis; LPS lipid A biosynthesis. Catalyzes the N-acylation of UDP-3-O-acylglucosamine using 3-hydroxyacyl-ACP as the acyl donor. Is involved in the biosynthesis of lipid A, a phosphorylated glycolipid that anchors the lipopolysaccharide to the outer membrane of the cell. This chain is UDP-3-O-acylglucosamine N-acyltransferase, found in Acinetobacter baumannii (strain ACICU).